A 223-amino-acid chain; its full sequence is Ribosomal RNA small subunit methyltransferase G (223 aa).

S-adenosyl-L-methionine-binding positions include glycine 83, leucine 88, 134–135, and arginine 152; that span reads AE.

This sequence belongs to the methyltransferase superfamily. RNA methyltransferase RsmG family.

The protein resides in the cytoplasm. Its function is as follows. Specifically methylates the N7 position of guanine in position 518 of 16S rRNA. The polypeptide is Ribosomal RNA small subunit methyltransferase G (Corynebacterium diphtheriae (strain ATCC 700971 / NCTC 13129 / Biotype gravis)).